We begin with the raw amino-acid sequence, 473 residues long: Photosystem II CP43 reaction center protein (473 aa).

A propeptide spanning residues 1–14 is cleaved from the precursor; it reads MKTLYSLRRFYHVE. At T15 the chain carries N-acetylthreonine. T15 carries the phosphothreonine modification. 5 helical membrane-spanning segments follow: residues 69–93, 134–155, 178–200, 255–275, and 291–312; these read LFEV…PHLA, LLGP…KDRN, KALY…RKIT, KPFA…LSYS, and WFNN…ASQA. Residue E367 participates in [CaMn4O5] cluster binding. The helical transmembrane segment at 447–471 threads the bilayer; it reads RARAAAAGFEKGIDRDFEPVLSMTP.

This sequence belongs to the PsbB/PsbC family. PsbC subfamily. In terms of assembly, PSII is composed of 1 copy each of membrane proteins PsbA, PsbB, PsbC, PsbD, PsbE, PsbF, PsbH, PsbI, PsbJ, PsbK, PsbL, PsbM, PsbT, PsbX, PsbY, PsbZ, Psb30/Ycf12, at least 3 peripheral proteins of the oxygen-evolving complex and a large number of cofactors. It forms dimeric complexes. Binds multiple chlorophylls and provides some of the ligands for the Ca-4Mn-5O cluster of the oxygen-evolving complex. It may also provide a ligand for a Cl- that is required for oxygen evolution. PSII binds additional chlorophylls, carotenoids and specific lipids. is required as a cofactor.

The protein resides in the plastid. It localises to the chloroplast thylakoid membrane. In terms of biological role, one of the components of the core complex of photosystem II (PSII). It binds chlorophyll and helps catalyze the primary light-induced photochemical processes of PSII. PSII is a light-driven water:plastoquinone oxidoreductase, using light energy to abstract electrons from H(2)O, generating O(2) and a proton gradient subsequently used for ATP formation. The protein is Photosystem II CP43 reaction center protein of Atropa belladonna (Belladonna).